A 90-amino-acid chain; its full sequence is Small ribosomal subunit protein bS16 (90 aa).

This sequence belongs to the bacterial ribosomal protein bS16 family.

The protein is Small ribosomal subunit protein bS16 of Lactococcus lactis subsp. cremoris (strain SK11).